An 834-amino-acid chain; its full sequence is Protein kintoun (834 aa).

4 disordered regions span residues 214–239 (TAEE…KQEP), 374–415 (SRED…SVAP), 547–669 (KGKV…STGR), and 759–834 (KKNQ…EMDD). Serine 378 carries the post-translational modification Phosphoserine. Residues 389 to 398 (PVEEDPDGEL) show a composition bias toward acidic residues. The span at 552-571 (AKKDNAPLDVKFERNQEGHA) shows a compositional bias: basic and acidic residues. Positions 582 to 596 (EEEEDKENQDQEPES) are enriched in acidic residues. A compositionally biased stretch (low complexity) spans 597–607 (DQQQQQQVQNK). 2 stretches are compositionally biased toward basic residues: residues 608-619 (KPGKKQRKKNKK) and 759-773 (KKNQ…RAQQ). Phosphoserine is present on serine 777. Basic and acidic residues predominate over residues 785–798 (EETRGSALKQEENP).

This sequence belongs to the PIH1 family. Kintoun subfamily. As to quaternary structure, interacts with Pp1alpha-96A, Pp1-87B, Pp1-13C and flw.

The protein localises to the cytoplasm. Its function is as follows. Required for cytoplasmic pre-assembly of axonemal dyneins, thereby playing a central role in motility in cilia and flagella. Involved in pre-assembly of dynein arm complexes in the cytoplasm before intraflagellar transport loads them for the ciliary compartment. In Drosophila melanogaster (Fruit fly), this protein is Protein kintoun.